The following is a 358-amino-acid chain: Neutral protease 2 homolog PADG_00776 (358 aa).

The N-terminal stretch at 1-19 is a signal peptide; sequence MRRVSGILAVAAFTISAFA. A propeptide spanning residues 20 to 185 is cleaved from the precursor; it reads GVIQPVAKDA…MNQFVKIAKL (166 aa). Disulfide bonds link Cys-188/Cys-259 and Cys-266/Cys-284. An N-linked (GlcNAc...) asparagine glycan is attached at Asn-249. Residue His-309 participates in Zn(2+) binding. Residue Glu-310 is part of the active site. 2 residues coordinate Zn(2+): His-313 and Asp-324.

The protein belongs to the peptidase M35 family. The cofactor is Zn(2+).

The protein resides in the secreted. The enzyme catalyses Preferential cleavage of bonds with hydrophobic residues in P1'. Also 3-Asn-|-Gln-4 and 8-Gly-|-Ser-9 bonds in insulin B chain.. Secreted metalloproteinase that allows assimilation of proteinaceous substrates. Shows high activities on basic nuclear substrates such as histone and protamine. The protein is Neutral protease 2 homolog PADG_00776 of Paracoccidioides brasiliensis (strain Pb18).